The primary structure comprises 629 residues: Protein EDS1B (629 aa).

S123 functions as the Nucleophile in the catalytic mechanism. Residues D187 and H317 each act as charge relay system in the active site.

In terms of assembly, interacts (via N-terminus) with PAD4 and SAG101. Part of a nuclear complex made of EDS1, PAD4 and SAG101, that can be redirected to the cytoplasm in the presence of an extranuclear form of EDS1. Does not interact with itself or with EDS1.

It is found in the nucleus. The protein resides in the cytoplasm. In terms of biological role, acts as a second functional copy of EDS1. Can mediate HRT-mediated resistance to turnip crinkle virus. The protein is Protein EDS1B (EDS1B) of Arabidopsis thaliana (Mouse-ear cress).